Reading from the N-terminus, the 73-residue chain is EAGKDCDCGSPANPCCDAATCKLLPGAQCGEGPCCDQCSFMKKGTICRRARGDDLDDYCNGRSAGCPRNPFHA.

The region spanning 1-73 (EAGKDCDCGS…AGCPRNPFHA (73 aa)) is the Disintegrin domain. Cystine bridges form between Cys6–Cys21, Cys8–Cys16, Cys15–Cys38, Cys29–Cys35, Cys34–Cys59, and Cys47–Cys66. The short motif at 51 to 53 (RGD) is the Cell attachment site element.

It belongs to the venom metalloproteinase (M12B) family. P-II subfamily. P-IIa sub-subfamily. In terms of assembly, monomer (disintegrin). In terms of tissue distribution, expressed by the venom gland.

It is found in the secreted. Functionally, inhibits fibrinogen interaction with platelets. Acts by binding to the alpha-IIb/beta-3 receptor (ITGA2B/ITGB3) on the platelet surface and inhibits aggregation induced by ADP, thrombin, platelet-activating factor and collagen. In Craspedocephalus gramineus (Bamboo pit viper), this protein is Disintegrin trigramin-beta-2.